Consider the following 107-residue polypeptide: Phosphoribosyl-ATP pyrophosphatase (107 aa).

The protein belongs to the PRA-PH family.

Its subcellular location is the cytoplasm. It catalyses the reaction 1-(5-phospho-beta-D-ribosyl)-ATP + H2O = 1-(5-phospho-beta-D-ribosyl)-5'-AMP + diphosphate + H(+). It participates in amino-acid biosynthesis; L-histidine biosynthesis; L-histidine from 5-phospho-alpha-D-ribose 1-diphosphate: step 2/9. The chain is Phosphoribosyl-ATP pyrophosphatase from Bacillus anthracis (strain A0248).